Consider the following 845-residue polypeptide: Beta-mannosidase B (845 aa).

N252 is a glycosylation site (N-linked (GlcNAc...) asparagine). The Proton donor role is filled by E432. N-linked (GlcNAc...) asparagine glycans are attached at residues N717 and N723.

Belongs to the glycosyl hydrolase 2 family. Beta-mannosidase B subfamily.

It catalyses the reaction Hydrolysis of terminal, non-reducing beta-D-mannose residues in beta-D-mannosides.. It functions in the pathway glycan metabolism; N-glycan degradation. In terms of biological role, exoglycosidase that cleaves the single beta-linked mannose residue from the non-reducing end of beta-mannosidic oligosaccharides of various complexity and length. Prefers mannobiose over mannotriose and has no activity against polymeric mannan. Is also severely restricted by galactosyl substitutions at the +1 subsite. This chain is Beta-mannosidase B (mndB), found in Aspergillus fumigatus (strain CBS 144.89 / FGSC A1163 / CEA10) (Neosartorya fumigata).